Consider the following 298-residue polypeptide: Interferon-inducible double-stranded RNA-dependent protein kinase activator A homolog B (298 aa).

3 DRBM domains span residues 20 to 87 (TPIQ…ILRG), 112 to 180 (NPVG…KFKT), and 225 to 293 (DYVK…YLKI).

This sequence belongs to the PRKRA family. As to quaternary structure, homodimer. Interacts with dicer1 and eif2ak2/pkr. Also able to interact with dsRNA. Associates with ribosomes. Expressed in brain, heart, kidney, liver, nerve and spleen.

It is found in the cytoplasm. The protein resides in the perinuclear region. Its subcellular location is the nucleus. It localises to the nucleolus. Activates eif2ak2/pkr in the absence of double-stranded RNA (dsRNA), leading to phosphorylation of eif2s1/efi2-alpha and inhibition of translation and induction of apoptosis. Required for siRNA production by dicer1 and for subsequent siRNA-mediated post-transcriptional gene silencing. Does not seem to be required for processing of pre-miRNA to miRNA by dicer1. This Xenopus laevis (African clawed frog) protein is Interferon-inducible double-stranded RNA-dependent protein kinase activator A homolog B (prkra-b).